The following is a 96-amino-acid chain: Citrate lyase acyl carrier protein (96 aa).

Serine 14 is modified (O-(phosphoribosyl dephospho-coenzyme A)serine).

It belongs to the CitD family. In terms of assembly, oligomer with a subunit composition of (alpha,beta,gamma)6.

The protein localises to the cytoplasm. In terms of biological role, covalent carrier of the coenzyme of citrate lyase. The sequence is that of Citrate lyase acyl carrier protein from Pectobacterium atrosepticum (strain SCRI 1043 / ATCC BAA-672) (Erwinia carotovora subsp. atroseptica).